The primary structure comprises 71 residues: Beta-defensin 131A (71 aa).

Residues 1–22 form the signal peptide; sequence MRVLFFVFGVLSLMFTVPPARS. Disulfide bonds link C29–C57, C37–C51, and C41–C58.

The protein belongs to the beta-defensin family.

The protein resides in the secreted. Its function is as follows. Has antibacterial activity. Upon stimulation with lipoteichoic acid, promotes cytokines and chemokines production and secretion. In Pan troglodytes (Chimpanzee), this protein is Beta-defensin 131A.